The following is a 1537-amino-acid chain: DNA-directed RNA polymerase subunit beta' (1537 aa).

Residues Cys57, Cys59, Cys72, and Cys75 each coordinate Zn(2+). Residues Asp746, Asp748, and Asp750 each contribute to the Mg(2+) site. Zn(2+)-binding residues include Cys1120, Cys1201, Cys1208, and Cys1211. The tract at residues 1502–1537 is disordered; the sequence is LEKYGQTSVSTDAVTGSQRYDDTRPSSTSINPSYGD. Polar residues-rich tracts occupy residues 1506–1519 and 1526–1537; these read GQTSVSTDAVTGSQ and PSSTSINPSYGD.

Belongs to the RNA polymerase beta' chain family. In terms of assembly, the RNAP catalytic core consists of 2 alpha, 1 beta, 1 beta' and 1 omega subunit. When a sigma factor is associated with the core the holoenzyme is formed, which can initiate transcription. Requires Mg(2+) as cofactor. It depends on Zn(2+) as a cofactor.

The enzyme catalyses RNA(n) + a ribonucleoside 5'-triphosphate = RNA(n+1) + diphosphate. Its function is as follows. DNA-dependent RNA polymerase catalyzes the transcription of DNA into RNA using the four ribonucleoside triphosphates as substrates. The sequence is that of DNA-directed RNA polymerase subunit beta' from Deinococcus geothermalis (strain DSM 11300 / CIP 105573 / AG-3a).